A 546-amino-acid chain; its full sequence is CCA tRNA nucleotidyltransferase, mitochondrial (546 aa).

It belongs to the tRNA nucleotidyltransferase/poly(A) polymerase family.

The protein resides in the mitochondrion. The protein localises to the cytoplasm. It localises to the nucleus. The catalysed reaction is a tRNA precursor + 2 CTP + ATP = a tRNA with a 3' CCA end + 3 diphosphate. In terms of biological role, nucleotidyltransferase that catalyzes the addition and repair of the essential 3'-terminal CCA sequence in tRNAs, which is necessary for the attachment of amino acids to the 3' terminus of tRNA molecules, using CTP and ATP as substrates. tRNA 3'-terminal CCA addition is required both for tRNA processing and repair. Also involved in tRNA surveillance by mediating tandem CCA addition to generate a CCACCA at the 3' terminus of unstable tRNAs. While stable tRNAs receive only 3'-terminal CCA, unstable tRNAs are marked with CCACCA and rapidly degraded. The structural flexibility of RNA controls the choice between CCA versus CCACCA addition: following the first CCA addition cycle, nucleotide-binding to the active site triggers a clockwise screw motion, producing torque on the RNA. This ejects stable RNAs, whereas unstable RNAs are refolded while bound to the enzyme and subjected to a second CCA catalytic cycle. The polypeptide is CCA tRNA nucleotidyltransferase, mitochondrial (CCA1) (Saccharomyces cerevisiae (strain ATCC 204508 / S288c) (Baker's yeast)).